We begin with the raw amino-acid sequence, 459 residues long: Vitronectin (459 aa).

A signal peptide spans 1–19 (MAPLRPLLMLALLAWVALA). Positions 20 to 63 (DQESCKGRCTDGFIAERKCQCDELCSYYQSCCTDYVAECKPQVT) constitute an SMB domain. 7 disulfide bridges follow: cysteine 24-cysteine 28, cysteine 24-cysteine 40, cysteine 28-cysteine 58, cysteine 38-cysteine 40, cysteine 38-cysteine 51, cysteine 44-cysteine 50, and cysteine 51-cysteine 58. The short motif at 64-66 (RGD) is the Cell attachment site element. Residues tyrosine 75, tyrosine 78, and tyrosine 80 each carry the sulfotyrosine modification. Asparagine 87 and asparagine 146 each carry an N-linked (GlcNAc...) asparagine glycan. 3 Hemopexin repeats span residues 135–179 (GKPF…VWGI), 180–227 (KGPI…FKGI), and 228–285 (PDDV…FALM). Residues serine 289 and serine 378 each carry the phosphoserine modification. The disordered stretch occupies residues 338–380 (LKPSQPKMTKSARRSGKRYRSRRGRGRGRGHSRSQKSHRQSRS). The span at 347 to 378 (KSARRSGKRYRSRRGRGRGRGHSRSQKSHRQS) shows a compositional bias: basic residues. 2 positions are modified to sulfotyrosine: tyrosine 398 and tyrosine 401. The Hemopexin 4 repeat unit spans residues 400 to 453 (DYKMDWLVPATCEPIQSVYFFSGEEYYRVNLRTQRVDTVTPPYPRSIAQYWLGC).

In terms of assembly, monomer. Interacts with SERPINE1/PAI1 and C1QBP. Post-translationally, sulfated on tyrosine residues. In terms of processing, N- and O-glycosylated. It has been suggested that the active SMB domain may be permitted considerable disulfide bond heterogeneity or variability, thus two alternate disulfide patterns based on 3D structures are described with 1 disulfide bond conserved in both. Plasma.

Its subcellular location is the secreted. It localises to the extracellular space. Its function is as follows. Vitronectin is a cell adhesion and spreading factor found in serum and tissues. Vitronectin interact with glycosaminoglycans and proteoglycans. Is recognized by certain members of the integrin family and serves as a cell-to-substrate adhesion molecule. Inhibitor of the membrane-damaging effect of the terminal cytolytic complement pathway. This is Vitronectin (VTN) from Sus scrofa (Pig).